Here is a 310-residue protein sequence, read N- to C-terminus: Syndecan-1 (310 aa).

The N-terminal stretch at 1–22 (MRRAALWLWLCALALSLQPALP) is a signal peptide. Over 23-254 (QIVATNLPPE…GLLDRKEVLG (232 aa)) the chain is Extracellular. Disordered stretches follow at residues 27–100 (TNLP…EGPK) and 114–212 (LTAR…QDFT). Residues 32–42 (EDQDGSGDDSD) show a composition bias toward acidic residues. A glycan (O-linked (Xyl...) (chondroitin sulfate) serine) is linked at S37. N-linked (GlcNAc...) asparagine glycosylation is present at N43. S45 and S47 each carry an O-linked (Xyl...) (heparan sulfate) serine glycan. A compositionally biased stretch (polar residues) spans 55-75 (ITLSQQTPSTWKDTQLLTAIP). Residues 117 to 127 (REQEATPRPRE) show a composition bias toward basic and acidic residues. Residues 128–151 (TTQLPTTHLASTTTATTAQEPATS) show a composition bias toward low complexity. Positions 153–164 (PHRDMQPGHHET) are enriched in basic and acidic residues. O-linked (Xyl...) (chondroitin sulfate) serine glycosylation is found at S206 and S216. A helical membrane pass occupies residues 255-275 (GVIAGGLVGLIFAVCLVGFML). Topologically, residues 276 to 310 (YRMKKKDEGSYSLEEPKQANGGAYQKPTKQEEFYA) are cytoplasmic. A disordered region spans residues 284-310 (GSYSLEEPKQANGGAYQKPTKQEEFYA). S285 carries the phosphoserine modification.

This sequence belongs to the syndecan proteoglycan family. In terms of assembly, interacts with CDCP1. Interacts (via C-terminus) with TIAM1 (via PDZ domain). Interacts with MDK. Post-translationally, shedding is enhanced by a number of factors such as heparanase, thrombin or EGF. Also by stress and wound healing. PMA-mediated shedding is inhibited by TIMP3. In terms of tissue distribution, detected in placenta (at protein level). Detected in fibroblasts (at protein level).

It is found in the membrane. The protein resides in the secreted. The protein localises to the extracellular exosome. In terms of biological role, cell surface proteoglycan that contains both heparan sulfate and chondroitin sulfate and that links the cytoskeleton to the interstitial matrix. Regulates exosome biogenesis in concert with SDCBP and PDCD6IP. Able to induce its own expression in dental mesenchymal cells and also in the neighboring dental epithelial cells via an MSX1-mediated pathway. The chain is Syndecan-1 from Homo sapiens (Human).